Reading from the N-terminus, the 271-residue chain is Formamidopyrimidine-DNA glycosylase (271 aa).

P2 acts as the Schiff-base intermediate with DNA in catalysis. E3 functions as the Proton donor in the catalytic mechanism. The active-site Proton donor; for beta-elimination activity is K57. Positions 90, 109, and 151 each coordinate DNA. The FPG-type zinc finger occupies 236-270; sequence HVYGRGGDTCTHCGQLLSEIRLGQRATVFCSICQQ. R260 acts as the Proton donor; for delta-elimination activity in catalysis.

The protein belongs to the FPG family. In terms of assembly, monomer. Zn(2+) serves as cofactor.

It carries out the reaction Hydrolysis of DNA containing ring-opened 7-methylguanine residues, releasing 2,6-diamino-4-hydroxy-5-(N-methyl)formamidopyrimidine.. It catalyses the reaction 2'-deoxyribonucleotide-(2'-deoxyribose 5'-phosphate)-2'-deoxyribonucleotide-DNA = a 3'-end 2'-deoxyribonucleotide-(2,3-dehydro-2,3-deoxyribose 5'-phosphate)-DNA + a 5'-end 5'-phospho-2'-deoxyribonucleoside-DNA + H(+). In terms of biological role, involved in base excision repair of DNA damaged by oxidation or by mutagenic agents. Acts as a DNA glycosylase that recognizes and removes damaged bases. Has a preference for oxidized purines, such as 7,8-dihydro-8-oxoguanine (8-oxoG). Has AP (apurinic/apyrimidinic) lyase activity and introduces nicks in the DNA strand. Cleaves the DNA backbone by beta-delta elimination to generate a single-strand break at the site of the removed base with both 3'- and 5'-phosphates. This is Formamidopyrimidine-DNA glycosylase from Shewanella piezotolerans (strain WP3 / JCM 13877).